A 1041-amino-acid polypeptide reads, in one-letter code: Sodium/potassium-transporting ATPase subunit alpha (1041 aa).

4 consecutive transmembrane segments (helical) span residues 115-135 (FGGF…AYSI), 147-167 (NLYL…FSYY), 312-332 (LITG…FILG), and 338-358 (AVIF…LATV). Asp394 functions as the 4-aspartylphosphate intermediate in the catalytic mechanism. Lys526 contributes to the ATP binding site. 4 consecutive transmembrane segments (helical) span residues 808–828 (FLAF…ILCI), 870–890 (MAYG…YFVI), 935–955 (TCHT…LIIC), and 970–990 (WALN…SYCP).

Belongs to the cation transport ATPase (P-type) (TC 3.A.3) family. Type IIC subfamily. As to quaternary structure, the sodium/potassium-transporting ATPase is composed of a catalytic alpha subunit, an auxiliary non-catalytic beta subunit and an additional regulatory subunit. In terms of tissue distribution, high levels are found in some adult tissues: Malpighian tubules, indirect flight muscles, tubular leg muscles and throughout the nervous system (brain, optic lobes, retina and ventral thoracic neuromere). Lower levels are detected at the posterior end where the reproductive organs and rectum are located.

It localises to the cell membrane. It carries out the reaction K(+)(out) + Na(+)(in) + ATP + H2O = K(+)(in) + Na(+)(out) + ADP + phosphate + H(+). Functionally, this is the catalytic component of the active enzyme, which catalyzes the hydrolysis of ATP coupled with the exchange of sodium and potassium ions across the plasma membrane. This action creates the electrochemical gradient of sodium and potassium ions, providing the energy for active transport of various nutrients. The polypeptide is Sodium/potassium-transporting ATPase subunit alpha (Atpalpha) (Drosophila melanogaster (Fruit fly)).